The following is a 607-amino-acid chain: DNA mismatch repair protein MutL (607 aa).

The interval 374 to 411 is disordered; the sequence is RTEAGNEHVPSANRIQPPDPSIDMPDEPVPEQTDEPVA. The span at 397 to 407 shows a compositional bias: acidic residues; that stretch reads MPDEPVPEQTD.

Belongs to the DNA mismatch repair MutL/HexB family.

Its function is as follows. This protein is involved in the repair of mismatches in DNA. It is required for dam-dependent methyl-directed DNA mismatch repair. May act as a 'molecular matchmaker', a protein that promotes the formation of a stable complex between two or more DNA-binding proteins in an ATP-dependent manner without itself being part of a final effector complex. The chain is DNA mismatch repair protein MutL from Exiguobacterium sibiricum (strain DSM 17290 / CCUG 55495 / CIP 109462 / JCM 13490 / 255-15).